A 365-amino-acid chain; its full sequence is Histidinol-phosphate aminotransferase (365 aa).

Residues 1-22 (MSRPVPNPGILDIAPYTPGKSP) are disordered. Position 221 is an N6-(pyridoxal phosphate)lysine (lysine 221).

It belongs to the class-II pyridoxal-phosphate-dependent aminotransferase family. Histidinol-phosphate aminotransferase subfamily. Homodimer. The cofactor is pyridoxal 5'-phosphate.

It carries out the reaction L-histidinol phosphate + 2-oxoglutarate = 3-(imidazol-4-yl)-2-oxopropyl phosphate + L-glutamate. Its pathway is amino-acid biosynthesis; L-histidine biosynthesis; L-histidine from 5-phospho-alpha-D-ribose 1-diphosphate: step 7/9. The chain is Histidinol-phosphate aminotransferase from Nitrobacter winogradskyi (strain ATCC 25391 / DSM 10237 / CIP 104748 / NCIMB 11846 / Nb-255).